The following is a 379-amino-acid chain: Cytochrome b (379 aa).

4 consecutive transmembrane segments (helical) span residues 33–53 (FGSLLGACLTIQIITGLFLAM), 77–98 (WTIRYLHANGASMFFLCLFIHV), 113–133 (WNVGIILLFSVMATAFMGYVL), and 178–198 (FFALHFILPFIISALVMIHLL). Heme b is bound by residues H83 and H97. Residues H182 and H196 each contribute to the heme b site. H201 contributes to the a ubiquinone binding site. A run of 4 helical transmembrane segments spans residues 226–246 (TKDFLGLLLLILLLMTTALFY), 288–308 (LGGVLALILSILILMIIPFLQ), 320–340 (LSQFLFWILVADLLTLTWIGG), and 347–367 (FINIGQMASMLYFFLMIFIMP).

It belongs to the cytochrome b family. The cytochrome bc1 complex contains 11 subunits: 3 respiratory subunits (MT-CYB, CYC1 and UQCRFS1), 2 core proteins (UQCRC1 and UQCRC2) and 6 low-molecular weight proteins (UQCRH/QCR6, UQCRB/QCR7, UQCRQ/QCR8, UQCR10/QCR9, UQCR11/QCR10 and a cleavage product of UQCRFS1). This cytochrome bc1 complex then forms a dimer. The cofactor is heme b.

The protein resides in the mitochondrion inner membrane. Functionally, component of the ubiquinol-cytochrome c reductase complex (complex III or cytochrome b-c1 complex) that is part of the mitochondrial respiratory chain. The b-c1 complex mediates electron transfer from ubiquinol to cytochrome c. Contributes to the generation of a proton gradient across the mitochondrial membrane that is then used for ATP synthesis. This Lepilemur ankaranensis (Ankarana sportive lemur) protein is Cytochrome b (MT-CYB).